Reading from the N-terminus, the 229-residue chain is ATP synthase subunit a (229 aa).

Helical transmembrane passes span 25-45, 82-102, 104-124, 142-162, 181-201, and 202-222; these read ADAVVYTWLIMIGLVVLSIAA, FFPLVATLALFILVSNLIGLV, GFFPPTANINTTAACAVVVFV, FLGPIAWLAPMMFFIEVIGHL, LVLIIFFGLAPFIVPLPMMLM, and GVLVSFIQAFVFMLLAMIYIQ.

This sequence belongs to the ATPase A chain family. In terms of assembly, F-type ATPases have 2 components, CF(1) - the catalytic core - and CF(0) - the membrane proton channel. CF(1) has five subunits: alpha(3), beta(3), gamma(1), delta(1), epsilon(1). CF(0) has three main subunits: a(1), b(2) and c(9-12). The alpha and beta chains form an alternating ring which encloses part of the gamma chain. CF(1) is attached to CF(0) by a central stalk formed by the gamma and epsilon chains, while a peripheral stalk is formed by the delta and b chains.

It is found in the cell inner membrane. Its function is as follows. Key component of the proton channel; it plays a direct role in the translocation of protons across the membrane. This Citrifermentans bemidjiense (strain ATCC BAA-1014 / DSM 16622 / JCM 12645 / Bem) (Geobacter bemidjiensis) protein is ATP synthase subunit a.